A 295-amino-acid chain; its full sequence is Small ribosomal subunit protein uS2 (295 aa).

An N-acetylserine modification is found at serine 2. Position 43 is a phosphoserine (serine 43). Lysine 52 carries the N6-acetyllysine modification. The segment at 54–113 is interaction with PPP1R16B; the sequence is TWEKLLLAARAIVAIENPADVSVISSRNTGQRAVLKFAAATGATPIAGRFTPGTFTNQIQ. N6-acetyllysine; alternate is present on lysine 89. Lysine 89 is covalently cross-linked (Glycyl lysine isopeptide (Lys-Gly) (interchain with G-Cter in SUMO2); alternate). Threonine 97 is modified (phosphothreonine). Laminin-binding stretches follow at residues 161–180 and 205–229; these read IPCN…MLAR and RDPE…EFQG. [DE]-W-[ST] repeat units lie at residues 230–232, 247–249, 266–268, 275–277, and 293–295; these read EWT, DWS, and EWS. A laminin-binding region spans residues 242-295; that stretch reads QPEVADWSEGVQVPSVPIQQFPTEDWSAQPATEDWSAAPTAQATEWVGATTEWS. A disordered region spans residues 266–295; the sequence is DWSAQPATEDWSAAPTAQATEWVGATTEWS.

The protein belongs to the universal ribosomal protein uS2 family. As to quaternary structure, monomer (37LRP) and homodimer (67LR). Component of the small ribosomal subunit. Mature ribosomes consist of a small (40S) and a large (60S) subunit. The 40S subunit contains about 33 different proteins and 1 molecule of RNA (18S). The 60S subunit contains about 49 different proteins and 3 molecules of RNA (28S, 5.8S and 5S). Interacts with RPS21. Interacts with several laminins including at least LAMB1. Interacts with MDK. Interacts with PRNP. The mature dimeric form interacts with PPP1R16B (via its fourth ankyrin repeat). Interacts with PPP1CA only in the presence of PPP1R16B. In terms of processing, acylated. Acylation may be a prerequisite for conversion of the monomeric 37 kDa laminin receptor precursor (37LRP) to the mature dimeric 67 kDa laminin receptor (67LR), and may provide a mechanism for membrane association. Post-translationally, cleaved by stromelysin-3 (ST3) at the cell surface. Cleavage by stromelysin-3 may be a mechanism to alter cell-extracellular matrix interactions.

The protein resides in the cell membrane. It localises to the cytoplasm. It is found in the nucleus. In terms of biological role, required for the assembly and/or stability of the 40S ribosomal subunit. Required for the processing of the 20S rRNA-precursor to mature 18S rRNA in a late step of the maturation of 40S ribosomal subunits. Also functions as a cell surface receptor for laminin. Plays a role in cell adhesion to the basement membrane and in the consequent activation of signaling transduction pathways. May play a role in cell fate determination and tissue morphogenesis. Also acts as a receptor for several other ligands, including the pathogenic prion protein, viruses, and bacteria. Acts as a PPP1R16B-dependent substrate of PPP1CA. Enables malignant tumor cells to penetrate laminin tissue and vessel barriers. Activates precursor thymic anti-OFA/iLRP specific cytotoxic T-cell. May induce CD8 T-suppressor cells secreting IL-10. The chain is Small ribosomal subunit protein uS2 (Rpsa) from Mus musculus (Mouse).